The primary structure comprises 144 residues: Large ribosomal subunit protein uL11 (144 aa).

Belongs to the universal ribosomal protein uL11 family. In terms of assembly, part of the ribosomal stalk of the 50S ribosomal subunit. Interacts with L10 and the large rRNA to form the base of the stalk. L10 forms an elongated spine to which L12 dimers bind in a sequential fashion forming a multimeric L10(L12)X complex. One or more lysine residues are methylated.

Its function is as follows. Forms part of the ribosomal stalk which helps the ribosome interact with GTP-bound translation factors. The chain is Large ribosomal subunit protein uL11 from Parafrankia sp. (strain EAN1pec).